Here is a 331-residue protein sequence, read N- to C-terminus: Major outer membrane protein P.IB (331 aa).

The N-terminal stretch at 1-19 (MKKSLIALTLAALPVAAMA) is a signal peptide.

It belongs to the Gram-negative porin family. As to quaternary structure, homotrimer.

Its subcellular location is the cell outer membrane. Its function is as follows. Serves as a slightly cation selective porin. The protein is Major outer membrane protein P.IB (porB) of Neisseria meningitidis serogroup B (strain ATCC BAA-335 / MC58).